The primary structure comprises 225 residues: ATP-dependent Clp protease proteolytic subunit (225 aa).

Catalysis depends on Ser123, which acts as the Nucleophile. Residue His148 is part of the active site.

Belongs to the peptidase S14 family. As to quaternary structure, fourteen ClpP subunits assemble into 2 heptameric rings which stack back to back to give a disk-like structure with a central cavity, resembling the structure of eukaryotic proteasomes.

The protein resides in the cytoplasm. The catalysed reaction is Hydrolysis of proteins to small peptides in the presence of ATP and magnesium. alpha-casein is the usual test substrate. In the absence of ATP, only oligopeptides shorter than five residues are hydrolyzed (such as succinyl-Leu-Tyr-|-NHMec, and Leu-Tyr-Leu-|-Tyr-Trp, in which cleavage of the -Tyr-|-Leu- and -Tyr-|-Trp bonds also occurs).. Functionally, cleaves peptides in various proteins in a process that requires ATP hydrolysis. Has a chymotrypsin-like activity. Plays a major role in the degradation of misfolded proteins. The chain is ATP-dependent Clp protease proteolytic subunit from Chlorobium luteolum (strain DSM 273 / BCRC 81028 / 2530) (Pelodictyon luteolum).